Reading from the N-terminus, the 306-residue chain is RNA pseudouridylate synthase domain-containing protein 1 (306 aa).

N-acetylmethionine is present on Met1. Asp67 is an active-site residue. The interval 255-290 (RTDPDPDPMSGGPRPCSPSTPQPRPGRPPPETEAQR) is disordered. Residues 269–285 (PCSPSTPQPRPGRPPPE) are compositionally biased toward pro residues.

The protein belongs to the pseudouridine synthase RluA family.

In Mus musculus (Mouse), this protein is RNA pseudouridylate synthase domain-containing protein 1 (Rpusd1).